The primary structure comprises 296 residues: 4-hydroxy-tetrahydrodipicolinate synthase (296 aa).

Threonine 46 is a binding site for pyruvate. Residue tyrosine 134 is the Proton donor/acceptor of the active site. Lysine 162 functions as the Schiff-base intermediate with substrate in the catalytic mechanism. Isoleucine 204 contacts pyruvate.

The protein belongs to the DapA family. In terms of assembly, homotetramer; dimer of dimers.

The protein localises to the cytoplasm. The catalysed reaction is L-aspartate 4-semialdehyde + pyruvate = (2S,4S)-4-hydroxy-2,3,4,5-tetrahydrodipicolinate + H2O + H(+). The protein operates within amino-acid biosynthesis; L-lysine biosynthesis via DAP pathway; (S)-tetrahydrodipicolinate from L-aspartate: step 3/4. Functionally, catalyzes the condensation of (S)-aspartate-beta-semialdehyde [(S)-ASA] and pyruvate to 4-hydroxy-tetrahydrodipicolinate (HTPA). The protein is 4-hydroxy-tetrahydrodipicolinate synthase of Clostridium novyi (strain NT).